Consider the following 201-residue polypeptide: Thioredoxin reductase-like selenoprotein T (201 aa).

Positions 1-26 (MARSSGPLCLLLLGGLVAGILSGASA) are cleaved as a signal peptide. Positions 51–54 (CVSU) form a cross-link, cysteinyl-selenocysteine (Cys-Sec). Sec-54 is a non-standard amino acid (selenocysteine). A helical transmembrane segment spans residues 96-116 (VFKLVLIGLIIAGKDPFAFFG).

It belongs to the SelWTH family. Selenoprotein T subfamily. Post-translationally, may contain a selenide-sulfide bond between Cys-51 and Sec-54. This bond is speculated to serve as redox-active pair.

Its subcellular location is the endoplasmic reticulum membrane. It carries out the reaction [thioredoxin]-dithiol + NADP(+) = [thioredoxin]-disulfide + NADPH + H(+). In terms of biological role, selenoprotein with thioredoxin reductase-like oxidoreductase activity. This Xenopus tropicalis (Western clawed frog) protein is Thioredoxin reductase-like selenoprotein T (selenot).